A 382-amino-acid polypeptide reads, in one-letter code: Kelch domain-containing protein 3 (382 aa).

Kelch repeat units lie at residues 25 to 77 (RVYS…PYMR), 88 to 138 (TVFL…VLGK), 139 to 189 (IMYI…TMLG), 191 to 249 (HMYV…GYNG), and 251 to 301 (LYIF…IVGD).

Component of a CRL2(KLHDC3) complex, also named ECS(KLHDC3) complex, composed of CUL2, Elongin BC (ELOB and ELOC), RBX1 and substrate-specific adapter KLHDC3. May form oligomers as a KLHDC3-ELOB-ELOC complex; this interaction is likely autoinhibitory for the E3 ligase complex. In terms of tissue distribution, expressed specifically in testis, particularly in pachytene spermatocytes.

Its subcellular location is the cytoplasm. The protein operates within protein modification; protein ubiquitination. In terms of biological role, substrate-recognition component of a Cul2-RING (CRL2) E3 ubiquitin-protein ligase complex of the DesCEND (destruction via C-end degrons) pathway, which recognizes a C-degron located at the extreme C terminus of target proteins, leading to their ubiquitination and degradation. The C-degron recognized by the DesCEND pathway is usually a motif of less than ten residues and can be present in full-length proteins, truncated proteins or proteolytically cleaved forms. The CRL2(KLHDC3) complex specifically recognizes proteins with a glycine (Gly) at the C-terminus, leading to their ubiquitination and degradation: recognizes the C-terminal -Arg-(Xaa)n-Arg-Gly, -Arg-(Xaa)n-Lys-Gly, and -Arg-(Xaa)n-Gln-Gly degrons. The CRL2(KLHDC3) complex mediates ubiquitination and degradation of truncated SELENOV and SEPHS2 selenoproteins produced by failed UGA/Sec decoding, which end with a glycine. May be involved in meiotic recombination process. The polypeptide is Kelch domain-containing protein 3 (Mus musculus (Mouse)).